A 437-amino-acid polypeptide reads, in one-letter code: Glutamate-1-semialdehyde 2,1-aminomutase (437 aa).

N6-(pyridoxal phosphate)lysine is present on Lys-272.

Belongs to the class-III pyridoxal-phosphate-dependent aminotransferase family. HemL subfamily. As to quaternary structure, homodimer. It depends on pyridoxal 5'-phosphate as a cofactor.

Its subcellular location is the cytoplasm. It carries out the reaction (S)-4-amino-5-oxopentanoate = 5-aminolevulinate. The protein operates within porphyrin-containing compound metabolism; protoporphyrin-IX biosynthesis; 5-aminolevulinate from L-glutamyl-tRNA(Glu): step 2/2. In Moorella thermoacetica (strain ATCC 39073 / JCM 9320), this protein is Glutamate-1-semialdehyde 2,1-aminomutase.